A 168-amino-acid polypeptide reads, in one-letter code: Photosystem I assembly protein Ycf3 (168 aa).

TPR repeat units follow at residues 35–68 (AFAYYRDGMSAQSEGNYAEALQNYYEAMRLEIDP), 72–105 (SYILYNIGLIHTRNGEHTKALEYYFRALERNPFL), and 120–153 (GEQAIRQGDSEIAEAWFDQAAEYWKQALALTPGN).

The protein belongs to the Ycf3 family.

It localises to the plastid. The protein resides in the chloroplast thylakoid membrane. Functionally, essential for the assembly of the photosystem I (PSI) complex. May act as a chaperone-like factor to guide the assembly of the PSI subunits. This is Photosystem I assembly protein Ycf3 from Morus indica (Mulberry).